The following is a 398-amino-acid chain: Lysophospholipid transporter LplT (398 aa).

Helical transmembrane passes span 19–39 (VIAA…ATLA), 53–73 (ILQM…GQVA), 91–111 (LGAA…LVGI), 139–159 (LMEA…GVLA), 164–184 (IAAL…NLFI), 227–247 (LFWG…PVAL), 257–277 (YLNA…AKLV), 281–301 (TVAR…IFSL), 304–324 (ALLP…FFVV), 350–370 (GENS…LVGI), and 372–392 (VVAI…ALWI).

The protein belongs to the major facilitator superfamily. LplT (TC 2.A.1.42) family.

Its subcellular location is the cell inner membrane. Functionally, catalyzes the facilitated diffusion of 2-acyl-glycero-3-phosphoethanolamine (2-acyl-GPE) into the cell. In Citrobacter koseri (strain ATCC BAA-895 / CDC 4225-83 / SGSC4696), this protein is Lysophospholipid transporter LplT.